Here is a 244-residue protein sequence, read N- to C-terminus: 5-oxoprolinase subunit A (244 aa).

The protein belongs to the LamB/PxpA family. In terms of assembly, forms a complex composed of PxpA, PxpB and PxpC.

It carries out the reaction 5-oxo-L-proline + ATP + 2 H2O = L-glutamate + ADP + phosphate + H(+). Its function is as follows. Catalyzes the cleavage of 5-oxoproline to form L-glutamate coupled to the hydrolysis of ATP to ADP and inorganic phosphate. In Escherichia fergusonii (strain ATCC 35469 / DSM 13698 / CCUG 18766 / IAM 14443 / JCM 21226 / LMG 7866 / NBRC 102419 / NCTC 12128 / CDC 0568-73), this protein is 5-oxoprolinase subunit A.